The chain runs to 176 residues: Large ribosomal subunit protein uL6 (176 aa).

Basic and acidic residues predominate over residues 151-170 (RPPEPYKGKGVRYADEQVRR). Positions 151 to 176 (RPPEPYKGKGVRYADEQVRRKEAKKK) are disordered.

The protein belongs to the universal ribosomal protein uL6 family. Part of the 50S ribosomal subunit.

This protein binds to the 23S rRNA, and is important in its secondary structure. It is located near the subunit interface in the base of the L7/L12 stalk, and near the tRNA binding site of the peptidyltransferase center. The sequence is that of Large ribosomal subunit protein uL6 from Shewanella halifaxensis (strain HAW-EB4).